Here is a 277-residue protein sequence, read N- to C-terminus: Ribosomal RNA small subunit methyltransferase A (277 aa).

The S-adenosyl-L-methionine site is built by N20, L22, G47, E68, D93, and N114.

It belongs to the class I-like SAM-binding methyltransferase superfamily. rRNA adenine N(6)-methyltransferase family. RsmA subfamily.

The protein localises to the cytoplasm. It carries out the reaction adenosine(1518)/adenosine(1519) in 16S rRNA + 4 S-adenosyl-L-methionine = N(6)-dimethyladenosine(1518)/N(6)-dimethyladenosine(1519) in 16S rRNA + 4 S-adenosyl-L-homocysteine + 4 H(+). Its function is as follows. Specifically dimethylates two adjacent adenosines (A1518 and A1519) in the loop of a conserved hairpin near the 3'-end of 16S rRNA in the 30S particle. May play a critical role in biogenesis of 30S subunits. This Aliivibrio salmonicida (strain LFI1238) (Vibrio salmonicida (strain LFI1238)) protein is Ribosomal RNA small subunit methyltransferase A.